Consider the following 81-residue polypeptide: Cytochrome c oxidase subunit 7B2, mitochondrial (81 aa).

Residues 1-25 constitute a mitochondrion transit peptide; that stretch reads MMFPLARNALSSLKIRSILQSMARQ. The Mitochondrial matrix segment spans residues 26–33; it reads SHVKHSPD. The helical transmembrane segment at 34–60 threads the bilayer; the sequence is FHDKYGNAVLASGTAFCVVAWVFTATQ. Residues 61 to 81 are Mitochondrial intermembrane-facing; that stretch reads IGIEWNLSPVGRVTPKEWKHQ.

The protein belongs to the cytochrome c oxidase VIIb family. Component of the cytochrome c oxidase (complex IV, CIV), a multisubunit enzyme composed of 14 subunits. The complex is composed of a catalytic core of 3 subunits MT-CO1, MT-CO2 and MT-CO3, encoded in the mitochondrial DNA, and 11 supernumerary subunits COX4I, COX5A, COX5B, COX6A, COX6B, COX6C, COX7A, COX7B, COX7C, COX8 and NDUFA4, which are encoded in the nuclear genome. The complex exists as a monomer or a dimer and forms supercomplexes (SCs) in the inner mitochondrial membrane with NADH-ubiquinone oxidoreductase (complex I, CI) and ubiquinol-cytochrome c oxidoreductase (cytochrome b-c1 complex, complex III, CIII), resulting in different assemblies (supercomplex SCI(1)III(2)IV(1) and megacomplex MCI(2)III(2)IV(2)).

The protein resides in the mitochondrion inner membrane. It functions in the pathway energy metabolism; oxidative phosphorylation. In terms of biological role, component of the cytochrome c oxidase, the last enzyme in the mitochondrial electron transport chain which drives oxidative phosphorylation. The respiratory chain contains 3 multisubunit complexes succinate dehydrogenase (complex II, CII), ubiquinol-cytochrome c oxidoreductase (cytochrome b-c1 complex, complex III, CIII) and cytochrome c oxidase (complex IV, CIV), that cooperate to transfer electrons derived from NADH and succinate to molecular oxygen, creating an electrochemical gradient over the inner membrane that drives transmembrane transport and the ATP synthase. Cytochrome c oxidase is the component of the respiratory chain that catalyzes the reduction of oxygen to water. Electrons originating from reduced cytochrome c in the intermembrane space (IMS) are transferred via the dinuclear copper A center (CU(A)) of subunit 2 and heme A of subunit 1 to the active site in subunit 1, a binuclear center (BNC) formed by heme A3 and copper B (CU(B)). The BNC reduces molecular oxygen to 2 water molecules using 4 electrons from cytochrome c in the IMS and 4 protons from the mitochondrial matrix. The sequence is that of Cytochrome c oxidase subunit 7B2, mitochondrial (COX7B2) from Macaca fascicularis (Crab-eating macaque).